The following is a 76-amino-acid chain: Theta defensin subunit A (76 aa).

The N-terminal stretch at 1–22 is a signal peptide; sequence MRTFALLTAMLLLVALHAQAEA. The propeptide occupies 23 to 64; it reads RQARADEAAAQQQPGADDQGMAHSFTWPENAALPLSESAKGL. The interval 25–45 is disordered; the sequence is ARADEAAAQQQPGADDQGMAH. The segment covering 30 to 44 has biased composition (low complexity); that stretch reads AAAQQQPGADDQGMA. Residue arginine 65 forms a Cyclopeptide (Arg-Cys) (interchain with C-73 in subunit A); in form BTD-3 linkage. Arginine 65 participates in a covalent cross-link: Cyclopeptide (Arg-Cys) (interchain with C-73 in subunit B); in form BTD-1. A Cyclopeptide (Arg-Cys) (interchain with C-73 in subunit C); in form BTD-4 cross-link involves residue arginine 65. A Cyclopeptide (Arg-Cys) (interchain with C-73 in subunit D); in form BTD-7 cross-link involves residue arginine 65. The cysteines at positions 68 and 73 are disulfide-linked. A Cyclopeptide (Cys-Arg) (interchain with R-65 in subunit A); in form BTD-3 cross-link involves residue cysteine 73. A Cyclopeptide (Cys-Arg) (interchain with R-65 in subunit B); in form BTD-1 cross-link involves residue cysteine 73. Cysteine 73 participates in a covalent cross-link: Cyclopeptide (Cys-Arg) (interchain with R-65 in subunit C); in form BTD-4. A Cyclopeptide (Cys-Arg) (interchain with R-65 in subunit D); in form BTD-7 cross-link involves residue cysteine 73. The propeptide occupies 74 to 76; that stretch reads RLL.

It belongs to the alpha-defensin family. Theta subfamily. BTD-1 is a cyclic heterodimer composed of subunits A and B; disulfide-linked. BTD-3 is a cyclic homodimer composed of two subunits A; disulfide-linked. BTD-4 is a cyclic heterodimer composed of subunits A and C; disulfide-linked. BTD-7 is a cyclic heterodimer composed of subunits A and D; disulfide-linked. Post-translationally, forms a cyclic peptide with subunit B (BTD-1), subunit A (BTD-3), subunit C (BTD-4), or subunit D (BTD-7). An additional intersubunit disulfide bond is formed.

In terms of biological role, BTD-1, BTD-3, BTD-4 and BTD-7 have antimicrobial activity against the Gram-negative bacterium E.coli ML35, the Gram-positive bacterium S.aureus 502a, and the fungus C.albicans 16820. BTD-3 is more effective against E.coli than BTD-1, BTD-4 and BTD-7. In Papio anubis (Olive baboon), this protein is Theta defensin subunit A (BTDA).